The following is a 744-amino-acid chain: MASTMMNYQDCGPMRYKSSVPVPASLYENTAYPSKFRPRISKHVDVADKACWEACDDFENATGLKLKADSVGCINPIGGNVNALWFPEAIPERLHIISYLSELLFRHDDLTDDAVTPEQFDEVHGPLARFLGSESKQSDHTTKHNAMNTMQARVAIEALEQNEQLGKLVIEKWKGIVSVRGQDAFMEHKTLDSYMHVRHYDAGAYSVWSQILFCCDISLTDEELTGLEPLTWLAFTQMILWHDYCSWDKEAATYLEREEGGSNMSAVQVYMAMYGLDQYAAKEFLLSEITRIEDEYCERKASYMIEFPPAPHITHYIGLIEMCMAGNTLWHLSSRRYNPAAPLPRREDIGKVNGGPLDASEVSKPVECSESDLGILTPVSSRLSTKRLRPFWNNQRTEYTTMTPAETSSDDKKKKAKASHETREDLLTVSPCAWPAEPDEKDILAAYLYTAARPASGARDKLMDALDKWYRVPPDALATIRTIIRIMHNASLMLDDVQDNSPVRRGSPSAHVIFGTAQTTNSASYLMIKCVDLARRLGDDSLSCLLSELSQLHLGQSHDLAWTFHCKAPSIPEYYSHLEQKTGGLFRMASRMMRASATQNKHLDACKLMSLLGRLYQLRDDYQDITSESLSTYDDLDEGSFTLPLIHALHREEEQGEVQLHSILQSARAARSASASSNNDGKLSVETKLLIREMLEEAGSLEHTRVVIRGLYDETRAVLTAMENEAGSGGKNWMLHLITFQLKV.

The interval 1 to 344 (MASTMMNYQD…RRYNPAAPLP (344 aa)) is terpene cyclase. Asp-108 and Asp-112 together coordinate Mg(2+). Residues Asp-108, Asp-112, 198-201 (RHYD), 246-250 (SWDKE), and 336-337 (RY) each bind substrate. Residues 108-112 (DDLTD) carry the DDXXD motif. Residues 345 to 744 (RREDIGKVNG…LHLITFQLKV (400 aa)) are prenyltransferase. Residues 399–422 (YTTMTPAETSSDDKKKKAKASHET) are disordered. The span at 409–422 (SDDKKKKAKASHET) shows a compositional bias: basic and acidic residues. The isopentenyl diphosphate site is built by Arg-459 and His-488. Mg(2+) is bound by residues Asp-495 and Asp-499. The short motif at 495–499 (DDVQD) is the DDXXD element. Arg-504 lines the dimethylallyl diphosphate pocket. Arg-505 provides a ligand contact to isopentenyl diphosphate. Residues Lys-581, Thr-582, and Gln-617 each contribute to the dimethylallyl diphosphate site.

The protein in the N-terminal section; belongs to the terpene synthase family. In the C-terminal section; belongs to the FPP/GGPP synthase family. Hexamer. Requires Mg(2+) as cofactor.

The enzyme catalyses isopentenyl diphosphate + (2E,6E)-farnesyl diphosphate = (2E,6E,10E)-geranylgeranyl diphosphate + diphosphate. It carries out the reaction (2E,6E,10E)-geranylgeranyl diphosphate = (5R,12R,14S)-dolasta-1(15),8-diene + diphosphate. The catalysed reaction is (2E,6E,10E)-geranylgeranyl diphosphate = delta-araneosene + diphosphate. In terms of biological role, bifunctional terpene synthase involved in the biosynthesis of the diterpenes delta-araneosene and dolasta-1(15),8-diene. The C-terminal prenyltransferase domain of CgDS catalyzes formation of the universal precursor of diterpene, geranylgeranyl diphosphate (GGPP), whereas the N-terminal terpene cyclase domain catalyzes the cyclization of GGPP to the intermediate delta-araneosene that is further converted to dolasta-1(15),8-diene in a second cyclization event. In some cases the cyclization stops at the delta-araneosene stage. The sequence is that of Dolasta-1(15),8-diene synthase from Colletotrichum gloeosporioides (Anthracnose fungus).